Reading from the N-terminus, the 371-residue chain is Zinc transporter ZIP13 (371 aa).

The Lumenal segment spans residues 1–7 (MPGCPCP). Residues 8 to 28 (GCGMAGPRLLFLTALALELLE) form a helical membrane-spanning segment. At 29-68 (RAGGSQPALRSRGTATACRLDNKESESWGALLSGERLDTW) the chain is on the cytoplasmic side. Residues 69 to 89 (ICSLLGSLMVGLSGVFPLLVI) traverse the membrane as a helical segment. Residues 90–108 (PLEMGTMLRSEAGAWRLKQ) lie on the Lumenal side of the membrane. A helical transmembrane segment spans residues 109 to 129 (LLSFALGGLLGNVFLHLLPEA). Topologically, residues 130 to 149 (WAYTCSASPGGEGQSLQQQQ) are cytoplasmic. The chain crosses the membrane as a helical span at residues 150–170 (QLGLWVIAGILTFLALEKMFL). Topologically, residues 171–235 (DSKEEGTSQA…TIDNFTHGLA (65 aa)) are lumenal. A helical membrane pass occupies residues 236–256 (VAASFLVSKKIGLLTTMAILL). The XEXPHE-motif signature appears at 257 to 262 (HEIPHE). Topologically, residues 257 to 278 (HEIPHEVGDFAILLRAGFDRWS) are cytoplasmic. A helical transmembrane segment spans residues 279-299 (AAKLQLSTALGGLLGAGFAIC). Residues 300 to 316 (TQSPKGVVGCSPAAEET) are Lumenal-facing. Residues 317–337 (AAWVLPFTSGGFLYIALVNVL) form a helical membrane-spanning segment. Topologically, residues 338–349 (PDLLEEEDPWRS) are cytoplasmic. A helical transmembrane segment spans residues 350 to 370 (LQQLLLLCAGIVVMVLFSLFV). Residue Asp371 is a topological domain, lumenal.

It belongs to the ZIP transporter (TC 2.A.5) family. As to quaternary structure, homodimer.

It localises to the golgi apparatus membrane. It is found in the cytoplasmic vesicle membrane. The protein resides in the endoplasmic reticulum membrane. The enzyme catalyses Zn(2+)(in) = Zn(2+)(out). Its function is as follows. Functions as a zinc transporter transporting Zn(2+) from the Golgi apparatus to the cytosol and thus influences the zinc level at least in areas of the cytosol. May regulate beige adipocyte differentiation. The polypeptide is Zinc transporter ZIP13 (Homo sapiens (Human)).